Here is a 205-residue protein sequence, read N- to C-terminus: Enhancer of split mgamma protein (205 aa).

Residues 15 to 72 form the bHLH domain; sequence YRKVMKPMLERKRRARINKCLDELKDLMVATLESEGEHVTRLEKADILELTVTHLQKM. The Orange domain occupies 93–126; that stretch reads FRSGYIHAVNEVSRSLSQLPGMNVSLGTQLMTHL. Residues 202-205 carry the WRPW motif motif; sequence WRPW.

Homodimer. Heterodimer with dpn. Might form higher-order oligomers. Transcription repression requires formation of a complex with a corepressor protein (Groucho). Expressed in sensory organ precursors in the wing, leg and eye imaginal disk.

It localises to the nucleus. Functionally, transcriptional repressor of genes that require a bHLH protein for their transcription. May serve as a transcriptional regulator of the Achaete-scute complex (AS-C) genes. Contributes to the neural-epidermal lineage decision during early neurogenesis. Part of the Notch signaling pathway, plays a role in neuroblasts proliferation in embryos and larvae. In the larval brain, together with other self-renewal transcriptional repressors such as klu and dpn, required for type II neuroblast self-renewal and for maintaining erm in an inactive state in intermediate neural progenitors (INP) derived from type II neuroblasts. This is Enhancer of split mgamma protein from Drosophila melanogaster (Fruit fly).